The sequence spans 650 residues: Probable ATP-dependent RNA helicase DDX17 (650 aa).

The interval 1–38 (MRGGGFGDRDRDRDRGGFGARGGSGLPPKKFGNPGERL) is disordered. Positions 7–16 (GDRDRDRDRG) are enriched in basic and acidic residues. N6-acetyllysine occurs at positions 29, 30, and 42. Residue Lys50 forms a Glycyl lysine isopeptide (Lys-Gly) (interchain with G-Cter in SUMO); alternate linkage. Lys50 participates in a covalent cross-link: Glycyl lysine isopeptide (Lys-Gly) (interchain with G-Cter in SUMO1); alternate. Residue Lys50 forms a Glycyl lysine isopeptide (Lys-Gly) (interchain with G-Cter in SUMO2); alternate linkage. Positions 92-120 (FAFHHANFPQYVMDVLMDQHFTEPTPIQC) match the Q motif motif. The Helicase ATP-binding domain occupies 123-298 (FPLALSGRDM…EDFLRDYTQI (176 aa)). Residue 136–143 (AQTGSGKT) participates in ATP binding. Residues 246–249 (DEAD) carry the DEAD box motif. A Helicase C-terminal domain is found at 326-473 (KLIQLMEEIM…AINPKLMQLV (148 aa)). Position 444 is a phosphothreonine (Thr444). Residue Lys449 forms a Glycyl lysine isopeptide (Lys-Gly) (interchain with G-Cter in SUMO2) linkage. The tract at residues 468-650 (KLMQLVDHRG…PPPPPPPSRK (183 aa)) is transactivation domain. Disordered stretches follow at residues 472–543 (LVDH…YGSP) and 583–650 (ASST…PSRK). The span at 489-499 (RTTSSANNPNL) shows a compositional bias: polar residues. Positions 504 to 531 (ECDRRLRGVKDGGRRDSTSYRDRSETDR) are enriched in basic and acidic residues. Over residues 583–609 (ASSTASAGRSSQSSSQQFSGIGRSGQQ) the composition is skewed to low complexity. Arg605 is modified (omega-N-methylarginine). The span at 610–619 (PQPLMSQQFA) shows a compositional bias: polar residues. Over residues 638–650 (YPPPPPPPPPSRK) the composition is skewed to pro residues. The interval 639-647 (PPPPPPPPP) is interaction with YAP1.

Belongs to the DEAD box helicase family. DDX5/DBP2 subfamily. In terms of assembly, interacts with DDX5 in an RNA-independent manner. Interacts with CDK9 transcription elongation complex under basal conditions. Following cell stimulation with poly(I:C), a synthetic double-stranded RNA mimicking viral infection, the interaction with CDK9 is decreased. Interacts with ESR1 in an estrogen-independent manner. Interacts with HNRNPH1; this interaction is important for the regulation of alternative splicing on G-quadruplex structures. At high, but not low, cell density, interacts with DROSHA and DGCR8, the core components of the microprocessor complex involved in the maturation of primary microRNAs (pri-miRNAs) into pre-miRNAs. The interaction with DGCR8 is reduced during mitosis. At low, but not high, cell density, interacts with YAP1 and with its paralog, WWTR1/TAZ. Interactions with DROSHA and YAP1 are mutually exclusive. In vitro, the pre-miRNA processing activity of the DDX17-containing microprocessor complex is weaker than that of the DROSHA/DGCR8 microprocessor complex. Interacts with UPF3B. Interacts with NFAT5; this interaction leads to DDX17 recruitment to LNC2 and S100A4 promoters and NFAT5-mediated DDX17-enhanced transactivation. Interacts with HDAC1, HDAC2 and HDAC3; this interaction with HDAC1 and HDAC3, but not HDAC2, depends upon DDX17 acetylation. Interacts with ZC3HAV1 (via N-terminal domain) in an RNA-independent manner. Interacts with EXOSC3/RRP40 and EXOSC5/RRP46; this interaction may be indirect and mediated by ZC3HAV1-binding. Interacts with EP300; this interaction leads to acetylation at lysine residues. Interacts with CREBBP/CBP and KAT2B/P/CAF. Directly interacts with CTNNB1. Interacts with MYOD1. Interacts with TP53. Interacts with DCP1A in an RNA-independent manner. Interacts with DCP2 in an RNA-dependent manner. Interacts with DHX36; this interaction occurs in a RNA-dependent manner. Interacts with ERCC6. Post-translationally, sumoylation significantly increases stability. It also promotes interaction specifically with HDAC1 (but not HDAC2, nor HDAC3) and strongly stimulates ESR1 and TP53 coactivation. Acetylation at lysine residues stabilizes the protein, stimulates interaction with HDAC1 and HDAC3, but not HDAC2, and represses ESR1 and TP53 coactivation activity.

It localises to the nucleus. Its subcellular location is the nucleolus. It is found in the cytoplasm. The protein resides in the cytosol. It catalyses the reaction ATP + H2O = ADP + phosphate + H(+). As an RNA helicase, unwinds RNA and alters RNA structures through ATP binding and hydrolysis. Involved in multiple cellular processes, including pre-mRNA splicing, alternative splicing, ribosomal RNA processing and miRNA processing, as well as transcription regulation. Regulates the alternative splicing of exons exhibiting specific features. This function requires the RNA helicase activity. Affects NFAT5 and histone macro-H2A.1/MACROH2A1 alternative splicing in a CDK9-dependent manner. Affects splicing of mediators of steroid hormone signaling pathway, including kinases that phosphorylates ESR1 and transcriptional regulators. By acting splicing of regulatory factors, participates in ESR1 and AR stabilization. Promotes the inclusion of specific AC-rich alternative exons in CD44 transcripts. In myoblasts and epithelial cells, cooperates with HNRNPH1 to control the splicing of specific subsets of exons. In addition to binding mature mRNAs, also interacts with certain pri-microRNAs, including MIR132/miR-132, and stabilizes the primary transcript. Also participates in the MIR132 processing, resulting in significantly higher levels of mature MIR132 than MIR212 despite the fact that both are cotranscribed and co-regulated. Binding of pri-microRNAs may occur on the 3' segment flanking the stem loop via the 5'-[ACG]CAUC[ACU]-3' consensus sequence. Participates in MYC down-regulation at high cell density through the production of MYC-targeting microRNAs. Along with DDX5, may be involved in the processing of the 32S intermediate into the mature 28S rRNA. Promoter-specific transcription regulator, functioning as a coactivator or corepressor depending on the context of the promoter and the transcriptional complex in which it exists. Enhances NFAT5 transcriptional activity. Synergizes with TP53 in the activation of the MDM2 promoter; this activity requires acetylation on lysine residues. May also coactivate MDM2 transcription through a TP53-independent pathway. Coactivates MMP7 transcription. Along with CTNNB1, coactivates MYC, JUN, FOSL1 and cyclin D1/CCND1 transcription. Alone or in combination with DDX5 and/or SRA1 non-coding RNA, plays a critical role in promoting the assembly of proteins required for the formation of the transcription initiation complex and chromatin remodeling leading to coactivation of MYOD1-dependent transcription. This helicase-independent activity is required for skeletal muscle cells to properly differentiate into myotubes. During epithelial-to-mesenchymal transition, coregulates SMAD-dependent transcriptional activity, directly controlling key effectors of differentiation, including miRNAs which in turn directly repress its expression. Plays a role in estrogen and testosterone signaling pathway at several levels. Mediates the use of alternative promoters in estrogen-responsive genes and regulates transcription and splicing of a large number of steroid hormone target genes. Contrary to the splicing regulation activity, transcriptional coregulation of the estrogen receptor ESR1 is helicase activity-independent. Plays a role in innate immunity. Specifically restricts bunyavirus infection, including Rift Valley fever virus (RVFV) or La Crosse virus (LACV), but not vesicular stomatitis virus (VSV), in an interferon- and DROSHA-independent manner. Binds to RVFV RNA, likely via structured viral RNA elements. Promotes mRNA degradation mediated by the antiviral zinc-finger protein ZC3HAV1, in an ATPase-dependent manner. The chain is Probable ATP-dependent RNA helicase DDX17 (Ddx17) from Mus musculus (Mouse).